The sequence spans 307 residues: Small ribosomal subunit protein uS3 (307 aa).

In terms of domain architecture, KH type-2 spans 17–86 (MDEYFAEQLN…NPQIDAQEVK (70 aa)). Basic and acidic residues predominate over residues 201-226 (IEEPAEKPAEKQVEKPAVAPKKEAAK). A disordered region spans residues 201–265 (IEEPAEKPAE…QVEASEDFEE (65 aa)). The span at 240-265 (PTEEPEVAEPEEAEEAQVEASEDFEE) shows a compositional bias: acidic residues.

The protein belongs to the universal ribosomal protein uS3 family. Part of the 30S ribosomal subunit.

Binds the lower part of the 30S subunit head. The protein is Small ribosomal subunit protein uS3 of Methanosarcina mazei (strain ATCC BAA-159 / DSM 3647 / Goe1 / Go1 / JCM 11833 / OCM 88) (Methanosarcina frisia).